Reading from the N-terminus, the 209-residue chain is MIAIIDYGMGNIRSVEQALKYIGAEYIVTSDKKEILRSDGVILPGVGAFPKAMDVLEERDLVCVLKEVCDIGKPLLGICLGMQLLFERSEELKDCSGLGLLPGEIRKLKVSYKIPHMGWNELRKEREFPLWNGLVDGSFVYYVHSYYADCPDEIVCGVSDYGMQVPGFVAKGNVFGAQFHPEKSGEIGMQILKNFQGVVEAWKSSQLSI.

Residues Met-1 to Ser-205 enclose the Glutamine amidotransferase type-1 domain. The active-site Nucleophile is the Cys-79. Catalysis depends on residues His-180 and Glu-182.

In terms of assembly, heterodimer of HisH and HisF.

The protein resides in the cytoplasm. It catalyses the reaction 5-[(5-phospho-1-deoxy-D-ribulos-1-ylimino)methylamino]-1-(5-phospho-beta-D-ribosyl)imidazole-4-carboxamide + L-glutamine = D-erythro-1-(imidazol-4-yl)glycerol 3-phosphate + 5-amino-1-(5-phospho-beta-D-ribosyl)imidazole-4-carboxamide + L-glutamate + H(+). The enzyme catalyses L-glutamine + H2O = L-glutamate + NH4(+). Its pathway is amino-acid biosynthesis; L-histidine biosynthesis; L-histidine from 5-phospho-alpha-D-ribose 1-diphosphate: step 5/9. In terms of biological role, IGPS catalyzes the conversion of PRFAR and glutamine to IGP, AICAR and glutamate. The HisH subunit catalyzes the hydrolysis of glutamine to glutamate and ammonia as part of the synthesis of IGP and AICAR. The resulting ammonia molecule is channeled to the active site of HisF. The polypeptide is Imidazole glycerol phosphate synthase subunit HisH (Bacillus cereus (strain ATCC 14579 / DSM 31 / CCUG 7414 / JCM 2152 / NBRC 15305 / NCIMB 9373 / NCTC 2599 / NRRL B-3711)).